The chain runs to 2190 residues: Integrator complex subunit 1 (2190 aa).

Positions 1–61 (MNRAKPTTVR…GLPSERKRDA (61 aa)) are disordered. Residue Ser-13 is modified to Phosphoserine. The span at 34 to 44 (GQANESKTAST) shows a compositional bias: polar residues. Lys-47 carries the N6-acetyllysine modification. Thr-83 is modified (phosphothreonine). Residues Ser-87, Ser-307, and Ser-924 each carry the phosphoserine modification. Positions 922–945 (AASGEEDDEGESKEQKAKKRQRQQ) are disordered. The segment covering 923 to 932 (ASGEEDDEGE) has biased composition (acidic residues). A helical membrane pass occupies residues 1159-1179 (TATMHILVVHAMVILLTLGPP). Residues 1311-1334 (SLPPRRDSTEAPKPKSSPEQPIGQ) are disordered. Basic and acidic residues predominate over residues 1314 to 1323 (PRRDSTEAPK). 4 positions are modified to phosphoserine: Ser-1318, Ser-1326, Ser-1327, and Ser-1395.

Belongs to the Integrator subunit 1 family. Component of the Integrator complex, composed of core subunits INTS1, INTS2, INTS3, INTS4, INTS5, INTS6, INTS7, INTS8, INTS9/RC74, INTS10, INTS11/CPSF3L, INTS12, INTS13, INTS14 and INTS15. The core complex associates with protein phosphatase 2A subunits PPP2CA and PPP2R1A, to form the Integrator-PP2A (INTAC) complex. Interacts with ESRRB, ESRRB is not a core component of the Integrator complex and this association is a bridge for the interaction with the multiprotein complex Integrator; attracts the transcriptional machinery.

It localises to the nucleus. It is found in the nucleus membrane. Component of the integrator complex, a multiprotein complex that terminates RNA polymerase II (Pol II) transcription in the promoter-proximal region of genes. The integrator complex provides a quality checkpoint during transcription elongation by driving premature transcription termination of transcripts that are unfavorably configured for transcriptional elongation: the complex terminates transcription by (1) catalyzing dephosphorylation of the C-terminal domain (CTD) of Pol II subunit POLR2A/RPB1 and SUPT5H/SPT5, (2) degrading the exiting nascent RNA transcript via endonuclease activity and (3) promoting the release of Pol II from bound DNA. The integrator complex is also involved in terminating the synthesis of non-coding Pol II transcripts, such as enhancer RNAs (eRNAs), small nuclear RNAs (snRNAs), telomerase RNAs and long non-coding RNAs (lncRNAs). Within the integrator complex, INTS1 is involved in the post-termination step: INTS1 displaces INTS3 and the SOSS factors, allowing the integrator complex to return to the closed conformation, ready to bind to the paused elongation complex for another termination cycle. Mediates recruitment of cytoplasmic dynein to the nuclear envelope, probably as component of the integrator complex. This is Integrator complex subunit 1 from Homo sapiens (Human).